The primary structure comprises 395 residues: Phosphatidylinositol 4-phosphate 5-kinase-like protein 1 (395 aa).

The segment at 1–25 (MATPSLRSHEIPAHSQEAGNKSISS) is disordered. The region spanning 37–394 (ARQSRVGLFE…RLCRWAEVHT (358 aa)) is the PIPK domain.

In terms of assembly, interacts with type I phosphatidylinositol 4-phosphate 5-kinases, including PIP5K1A and PIP5K1B. As to expression, highly expressed in brain and testis, relatively to heart, spleen, lung, liver, skeletal muscle and kidney.

It localises to the cytoplasm. The protein localises to the membrane. Its function is as follows. May act as a scaffold to localize and regulate type I phosphatidylinositol 4-phosphate 5-kinases to specific compartments within the cell, where they generate PI(4,5)P2 for actin nucleation, signaling and scaffold protein recruitment and conversion to PI(3,4,5)P3. This is Phosphatidylinositol 4-phosphate 5-kinase-like protein 1 (Pip5kl1) from Mus musculus (Mouse).